Consider the following 109-residue polypeptide: Large ribosomal subunit protein uL22 (109 aa).

It belongs to the universal ribosomal protein uL22 family. In terms of assembly, part of the 50S ribosomal subunit.

In terms of biological role, this protein binds specifically to 23S rRNA; its binding is stimulated by other ribosomal proteins, e.g. L4, L17, and L20. It is important during the early stages of 50S assembly. It makes multiple contacts with different domains of the 23S rRNA in the assembled 50S subunit and ribosome. Functionally, the globular domain of the protein is located near the polypeptide exit tunnel on the outside of the subunit, while an extended beta-hairpin is found that lines the wall of the exit tunnel in the center of the 70S ribosome. The chain is Large ribosomal subunit protein uL22 from Polaromonas naphthalenivorans (strain CJ2).